The sequence spans 246 residues: UPF0246 protein str1967 (246 aa).

Belongs to the UPF0246 family.

The chain is UPF0246 protein str1967 from Streptococcus thermophilus (strain CNRZ 1066).